The sequence spans 544 residues: Membrane protein insertase YidC (544 aa).

The next 5 membrane-spanning stretches (helical) occupy residues 6-26 (NILL…WQTD), 345-365 (LLMF…LITL), 423-443 (GGCL…WVLL), 460-480 (LSVQ…MFVM), and 503-523 (VVFT…WLVG).

It belongs to the OXA1/ALB3/YidC family. Type 1 subfamily. In terms of assembly, interacts with the Sec translocase complex via SecD. Specifically interacts with transmembrane segments of nascent integral membrane proteins during membrane integration.

Its subcellular location is the cell inner membrane. Required for the insertion and/or proper folding and/or complex formation of integral membrane proteins into the membrane. Involved in integration of membrane proteins that insert both dependently and independently of the Sec translocase complex, as well as at least some lipoproteins. Aids folding of multispanning membrane proteins. This Shewanella woodyi (strain ATCC 51908 / MS32) protein is Membrane protein insertase YidC.